The following is a 381-amino-acid chain: ELMO domain-containing protein 3 (381 aa).

Residues 1–17 (MNENFHSFHEKELRDGQ) show a composition bias toward basic and acidic residues. Residues 1–31 (MNENFHSFHEKELRDGQVESVSAGSSPPCDK) form a disordered region. An ELMO domain is found at 170 to 324 (MHGRVLQTIY…DLEMSAKKSP (155 aa)).

The protein localises to the cell projection. Its subcellular location is the stereocilium. The protein resides in the kinocilium. It is found in the cytoplasm. It localises to the cytoskeleton. Its function is as follows. Acts as a GTPase-activating protein (GAP) for ARL2 with low specific activity. This chain is ELMO domain-containing protein 3 (ELMOD3), found in Bos taurus (Bovine).